A 1334-amino-acid chain; its full sequence is DNA-directed RNA polymerase subunit beta' (1334 aa).

Positions 213, 284, 291, and 294 each coordinate Zn(2+). The span at 1299-1308 (SSRGSSRFSR) shows a compositional bias: low complexity. Residues 1299-1334 (SSRGSSRFSRQPISDRWSEADEEGEEDDFEEDYEEE) form a disordered region. The span at 1318–1334 (ADEEGEEDDFEEDYEEE) shows a compositional bias: acidic residues.

This sequence belongs to the RNA polymerase beta' chain family. RpoC2 subfamily. In terms of assembly, in cyanobacteria the RNAP catalytic core is composed of 2 alpha, 1 beta, 1 beta', 1 gamma and 1 omega subunit. When a sigma factor is associated with the core the holoenzyme is formed, which can initiate transcription. Zn(2+) serves as cofactor.

The enzyme catalyses RNA(n) + a ribonucleoside 5'-triphosphate = RNA(n+1) + diphosphate. DNA-dependent RNA polymerase catalyzes the transcription of DNA into RNA using the four ribonucleoside triphosphates as substrates. In Microcystis aeruginosa (strain NIES-843 / IAM M-2473), this protein is DNA-directed RNA polymerase subunit beta'.